The sequence spans 83 residues: Large ribosomal subunit protein bL31 (83 aa).

The protein belongs to the bacterial ribosomal protein bL31 family. Type A subfamily. In terms of assembly, part of the 50S ribosomal subunit.

In terms of biological role, binds the 23S rRNA. The polypeptide is Large ribosomal subunit protein bL31 (Gloeothece citriformis (strain PCC 7424) (Cyanothece sp. (strain PCC 7424))).